The sequence spans 207 residues: dTTP/UTP pyrophosphatase (207 aa).

D86 functions as the Proton acceptor in the catalytic mechanism.

Belongs to the Maf family. YhdE subfamily. A divalent metal cation is required as a cofactor.

It localises to the cytoplasm. The catalysed reaction is dTTP + H2O = dTMP + diphosphate + H(+). It carries out the reaction UTP + H2O = UMP + diphosphate + H(+). Its function is as follows. Nucleoside triphosphate pyrophosphatase that hydrolyzes dTTP and UTP. May have a dual role in cell division arrest and in preventing the incorporation of modified nucleotides into cellular nucleic acids. This chain is dTTP/UTP pyrophosphatase, found in Nitrosospira multiformis (strain ATCC 25196 / NCIMB 11849 / C 71).